Here is a 184-residue protein sequence, read N- to C-terminus: Gastrokine-2 (184 aa).

An N-terminal signal peptide occupies residues 1–20 (MKSLVAFLVVLSILRIQSQA). A BRICHOS domain is found at 54–151 (HSGSCSSTTI…LCKHIPLYEG (98 aa)). Cysteines 81 and 143 form a disulfide.

In terms of assembly, heterodimer with TFF1; disulfide linked. Interacts with TFF2.

The protein resides in the secreted. In Rattus norvegicus (Rat), this protein is Gastrokine-2 (Gkn2).